A 245-amino-acid polypeptide reads, in one-letter code: 2,3-bisphosphoglycerate-dependent phosphoglycerate mutase (245 aa).

Substrate is bound by residues R8 to N15, T21 to G22, R60, E87 to Y90, K98, R114 to R115, and G183 to N184. H9 acts as the Tele-phosphohistidine intermediate in catalysis. The active-site Proton donor/acceptor is E87.

Belongs to the phosphoglycerate mutase family. BPG-dependent PGAM subfamily.

The enzyme catalyses (2R)-2-phosphoglycerate = (2R)-3-phosphoglycerate. It functions in the pathway carbohydrate degradation; glycolysis; pyruvate from D-glyceraldehyde 3-phosphate: step 3/5. Its function is as follows. Catalyzes the interconversion of 2-phosphoglycerate and 3-phosphoglycerate. The sequence is that of 2,3-bisphosphoglycerate-dependent phosphoglycerate mutase from Bacillus anthracis (strain A0248).